A 272-amino-acid polypeptide reads, in one-letter code: Energy-coupling factor transporter ATP-binding protein EcfA1 (272 aa).

The region spanning I2 to D237 is the ABC transporter domain. G37–S44 provides a ligand contact to ATP.

The protein belongs to the ABC transporter superfamily. Energy-coupling factor EcfA family. In terms of assembly, forms a stable energy-coupling factor (ECF) transporter complex composed of 2 membrane-embedded substrate-binding proteins (S component), 2 ATP-binding proteins (A component) and 2 transmembrane proteins (T component).

It is found in the cell membrane. Functionally, ATP-binding (A) component of a common energy-coupling factor (ECF) ABC-transporter complex. Unlike classic ABC transporters this ECF transporter provides the energy necessary to transport a number of different substrates. The sequence is that of Energy-coupling factor transporter ATP-binding protein EcfA1 from Mesomycoplasma hyopneumoniae (strain 7448) (Mycoplasma hyopneumoniae).